We begin with the raw amino-acid sequence, 476 residues long: Zinc metalloproteinase/disintegrin (476 aa).

An N-terminal signal peptide occupies residues 1-20 (MIQVLLVIICLADFPYQGTS). Positions 21–184 (IILESGNVND…KSDEPIKASQ (164 aa)) are excised as a propeptide. Q185 is modified (pyrrolidone carboxylic acid). Residues 191–387 (RYIELVVVAD…RNPQCILNEP (197 aa)) form the Peptidase M12B domain. Ca(2+) contacts are provided by E194 and D278. 3 disulfides stabilise this stretch: C302-C382, C342-C366, and C344-C349. Position 327 (H327) interacts with Zn(2+). E328 is a catalytic residue. Zn(2+)-binding residues include H331 and H337. The Ca(2+) site is built by C382 and N385. A propeptide spanning residues 388–403 (LRTDTVSTPVSGNELL) is cleaved from the precursor. The Disintegrin domain maps to 395 to 476 (TPVSGNELLE…AGCPRNGFYG (82 aa)). Cystine bridges form between C409-C424, C411-C419, C418-C441, C432-C438, C437-C462, and C450-C469. The short motif at 454–456 (KGD) is the Cell attachment site element.

The protein belongs to the venom metalloproteinase (M12B) family. P-II subfamily. P-IId sub-subfamily. As to quaternary structure, homodimer; disulfide-linked (disintegrin). The cofactor is Zn(2+). In terms of tissue distribution, expressed by the venom gland.

The protein localises to the secreted. The metalloproteinase is inhibited by EDTA, o-phenanthroline, and cysteine. Glutathione does not inhibit the enzymatic activity. Its function is as follows. Shows weak degradation of alpha-fibrinogen, but has no activity on beta- and gamma-chains. Digests luteinizing hormone-releasing hormone (LH-RH) and oxidized insulin at X-Leu, X-Phe, and X-Val bonds as well as X-His bond. Does not show fibrinogen-clotting activity. Does not show hemorrhagic activity. In terms of biological role, inhibits ADP-induced platelet aggregation. The chain is Zinc metalloproteinase/disintegrin from Gloydius brevicauda (Korean slamosa snake).